A 231-amino-acid polypeptide reads, in one-letter code: Superoxide dismutase [Mn], mitochondrial (231 aa).

The N-terminal 27 residues, 1 to 27 (MALRTLASRKTLAAAALPLAAAAAARG), are a transit peptide targeting the mitochondrion. Mn(2+) is bound by residues His55, His103, Asp192, and His196.

The protein belongs to the iron/manganese superoxide dismutase family. Homotetramer. Mn(2+) is required as a cofactor.

The protein resides in the mitochondrion matrix. It catalyses the reaction 2 superoxide + 2 H(+) = H2O2 + O2. Its function is as follows. Destroys superoxide anion radicals which are normally produced within the cells and which are toxic to biological systems. This Oryza sativa subsp. japonica (Rice) protein is Superoxide dismutase [Mn], mitochondrial (SODA).